Reading from the N-terminus, the 53-residue chain is UPF0391 membrane protein Bcen2424_6479 (53 aa).

Transmembrane regions (helical) follow at residues 5 to 25 (AIIF…GIAA) and 30 to 50 (IAKI…LLGV).

This sequence belongs to the UPF0391 family.

It localises to the cell membrane. This chain is UPF0391 membrane protein Bcen2424_6479, found in Burkholderia cenocepacia (strain HI2424).